Here is a 141-residue protein sequence, read N- to C-terminus: Hemoglobin subunit alpha (141 aa).

In terms of domain architecture, Globin spans Val1–Arg141. Residue Ser3 is modified to Phosphoserine. N6-succinyllysine occurs at positions 7 and 11. Lys16 bears the N6-acetyllysine; alternate mark. At Lys16 the chain carries N6-succinyllysine; alternate. A Phosphotyrosine modification is found at Tyr24. Ser35 is subject to Phosphoserine. Lys40 bears the N6-succinyllysine mark. Ser49 is modified (phosphoserine). Residue His58 coordinates O2. His87 lines the heme b pocket. Ser102 carries the phosphoserine modification. Thr108 is modified (phosphothreonine). The residue at position 124 (Ser124) is a Phosphoserine. Phosphothreonine is present on residues Thr134 and Thr137. At Ser138 the chain carries Phosphoserine.

Belongs to the globin family. In terms of assembly, heterotetramer of two alpha chains and two beta chains. As to expression, red blood cells.

Involved in oxygen transport from the lung to the various peripheral tissues. Its function is as follows. Hemopressin acts as an antagonist peptide of the cannabinoid receptor CNR1. Hemopressin-binding efficiently blocks cannabinoid receptor CNR1 and subsequent signaling. The polypeptide is Hemoglobin subunit alpha (HBA) (Panthera tigris sumatrae (Sumatran tiger)).